The following is a 137-amino-acid chain: Thioredoxin-like protein R548 (137 aa).

In terms of domain architecture, Thioredoxin spans 2–137; that stretch reads SKDSVETNTI…LEKSIVESSQ (136 aa). Catalysis depends on nucleophile residues Cys61 and Cys64. Cysteines 61 and 64 form a disulfide.

The protein belongs to the thioredoxin family.

Its function is as follows. Participates in various redox reactions through the reversible oxidation of its active center dithiol to a disulfide and catalyzes dithiol-disulfide exchange reactions. This Acanthamoeba polyphaga mimivirus (APMV) protein is Thioredoxin-like protein R548.